The primary structure comprises 102 residues: Protein CASC2, isoform 3 (102 aa).

Expressed in normal and neoplastic endometrial tissues.

May act as a potential tumor suppressor. In Homo sapiens (Human), this protein is Protein CASC2, isoform 3 (CASC2).